Consider the following 244-residue polypeptide: Probable transcriptional regulatory protein XF_1906 (244 aa).

It belongs to the TACO1 family.

The protein localises to the cytoplasm. The sequence is that of Probable transcriptional regulatory protein XF_1906 from Xylella fastidiosa (strain 9a5c).